The following is a 141-amino-acid chain: Hemoglobin subunit alpha (141 aa).

One can recognise a Globin domain in the interval 1–141 (VLSPADKTNV…VSTVLTSKYR (141 aa)). Position 3 is a phosphoserine (Ser-3). Lys-7 is subject to N6-succinyllysine. Phosphothreonine is present on Thr-8. Lys-11 bears the N6-succinyllysine mark. N6-acetyllysine; alternate is present on Lys-16. Residue Lys-16 is modified to N6-succinyllysine; alternate. The residue at position 24 (Tyr-24) is a Phosphotyrosine. Lys-40 is modified (N6-succinyllysine). Phosphoserine is present on Ser-49. O2 is bound at residue His-58. Position 87 (His-87) interacts with heme b. Ser-102 carries the post-translational modification Phosphoserine. The residue at position 108 (Thr-108) is a Phosphothreonine. At Ser-124 the chain carries Phosphoserine. Phosphothreonine is present on residues Thr-134 and Thr-137. The residue at position 138 (Ser-138) is a Phosphoserine.

This sequence belongs to the globin family. As to quaternary structure, heterotetramer of two alpha chains and two beta chains. Red blood cells.

In terms of biological role, involved in oxygen transport from the lung to the various peripheral tissues. Functionally, hemopressin acts as an antagonist peptide of the cannabinoid receptor CNR1. Hemopressin-binding efficiently blocks cannabinoid receptor CNR1 and subsequent signaling. In Phoca vitulina (Harbor seal), this protein is Hemoglobin subunit alpha (HBA).